The following is a 326-amino-acid chain: Ribose-phosphate pyrophosphokinase (326 aa).

ATP-binding positions include 45–47 (NGE) and 104–105 (RQ). The Mg(2+) site is built by His138 and Asp178. Lys202 is an active-site residue. Residues Arg204, Asp230, and 234 to 238 (DTGGT) each bind D-ribose 5-phosphate.

It belongs to the ribose-phosphate pyrophosphokinase family. Class I subfamily. In terms of assembly, homohexamer. It depends on Mg(2+) as a cofactor.

The protein resides in the cytoplasm. It catalyses the reaction D-ribose 5-phosphate + ATP = 5-phospho-alpha-D-ribose 1-diphosphate + AMP + H(+). It functions in the pathway metabolic intermediate biosynthesis; 5-phospho-alpha-D-ribose 1-diphosphate biosynthesis; 5-phospho-alpha-D-ribose 1-diphosphate from D-ribose 5-phosphate (route I): step 1/1. Functionally, involved in the biosynthesis of the central metabolite phospho-alpha-D-ribosyl-1-pyrophosphate (PRPP) via the transfer of pyrophosphoryl group from ATP to 1-hydroxyl of ribose-5-phosphate (Rib-5-P). This chain is Ribose-phosphate pyrophosphokinase, found in Mycobacterium bovis (strain ATCC BAA-935 / AF2122/97).